An 814-amino-acid polypeptide reads, in one-letter code: Valine--tRNA ligase (814 aa).

The 'HIGH' region motif lies at 46–56 (PTVSGQLHIGH). The 'KMSKS' region motif lies at 536-540 (KMSKS). K539 serves as a coordination point for ATP.

The protein belongs to the class-I aminoacyl-tRNA synthetase family. ValS type 2 subfamily. In terms of assembly, monomer.

It localises to the cytoplasm. It catalyses the reaction tRNA(Val) + L-valine + ATP = L-valyl-tRNA(Val) + AMP + diphosphate. Functionally, catalyzes the attachment of valine to tRNA(Val). As ValRS can inadvertently accommodate and process structurally similar amino acids such as threonine, to avoid such errors, it has a 'posttransfer' editing activity that hydrolyzes mischarged Thr-tRNA(Val) in a tRNA-dependent manner. The chain is Valine--tRNA ligase from Rickettsia typhi (strain ATCC VR-144 / Wilmington).